The primary structure comprises 347 residues: GMP reductase (347 aa).

Residue 108-131 coordinates NADP(+); that stretch reads ADFEKTKQILAQSPALNFVCIDVA. The K(+) site is built by glycine 181 and glycine 183. The Thioimidate intermediate role is filled by cysteine 186. 216 to 239 lines the NADP(+) pocket; that stretch reads IVSDGGCTMPGDVAKAFGGGADFV.

This sequence belongs to the IMPDH/GMPR family. GuaC type 1 subfamily. In terms of assembly, homotetramer.

It catalyses the reaction IMP + NH4(+) + NADP(+) = GMP + NADPH + 2 H(+). In terms of biological role, catalyzes the irreversible NADPH-dependent deamination of GMP to IMP. It functions in the conversion of nucleobase, nucleoside and nucleotide derivatives of G to A nucleotides, and in maintaining the intracellular balance of A and G nucleotides. This Citrobacter koseri (strain ATCC BAA-895 / CDC 4225-83 / SGSC4696) protein is GMP reductase.